The primary structure comprises 157 residues: Type II restriction enzyme PvuII (157 aa).

Asp58 and Glu68 together coordinate Mg(2+).

As to quaternary structure, homodimer. The cofactor is Mg(2+).

The catalysed reaction is Endonucleolytic cleavage of DNA to give specific double-stranded fragments with terminal 5'-phosphates.. In terms of biological role, a P subtype restriction enzyme that recognizes the double-stranded sequence 5'-CAGCTG-3' and cleaves after G-3. This is Type II restriction enzyme PvuII (pvuIIR) from Proteus hauseri.